The following is a 367-amino-acid chain: Probable peptidoglycan glycosyltransferase FtsW (367 aa).

9 helical membrane passes run 32–52 (LIFI…PMKF), 57–77 (AFWG…PGIG), 87–107 (IPIG…MIVF), 119–139 (IHGL…CFLL), 149–169 (MVVV…FALF), 171–191 (LLFL…PWRM), 251–271 (VVGE…FVLL), 296–316 (GVVV…FGVF), and 323–343 (LPFI…FGLL).

This sequence belongs to the SEDS family. FtsW subfamily.

The protein localises to the cell inner membrane. The catalysed reaction is [GlcNAc-(1-&gt;4)-Mur2Ac(oyl-L-Ala-gamma-D-Glu-L-Lys-D-Ala-D-Ala)](n)-di-trans,octa-cis-undecaprenyl diphosphate + beta-D-GlcNAc-(1-&gt;4)-Mur2Ac(oyl-L-Ala-gamma-D-Glu-L-Lys-D-Ala-D-Ala)-di-trans,octa-cis-undecaprenyl diphosphate = [GlcNAc-(1-&gt;4)-Mur2Ac(oyl-L-Ala-gamma-D-Glu-L-Lys-D-Ala-D-Ala)](n+1)-di-trans,octa-cis-undecaprenyl diphosphate + di-trans,octa-cis-undecaprenyl diphosphate + H(+). It functions in the pathway cell wall biogenesis; peptidoglycan biosynthesis. In terms of biological role, peptidoglycan polymerase that is essential for cell division. The polypeptide is Probable peptidoglycan glycosyltransferase FtsW (Taylorella equigenitalis (strain MCE9)).